Here is a 267-residue protein sequence, read N- to C-terminus: Tryptophan synthase alpha chain (267 aa).

Active-site proton acceptor residues include glutamate 49 and aspartate 60.

This sequence belongs to the TrpA family. As to quaternary structure, tetramer of two alpha and two beta chains.

It catalyses the reaction (1S,2R)-1-C-(indol-3-yl)glycerol 3-phosphate + L-serine = D-glyceraldehyde 3-phosphate + L-tryptophan + H2O. Its pathway is amino-acid biosynthesis; L-tryptophan biosynthesis; L-tryptophan from chorismate: step 5/5. In terms of biological role, the alpha subunit is responsible for the aldol cleavage of indoleglycerol phosphate to indole and glyceraldehyde 3-phosphate. The protein is Tryptophan synthase alpha chain of Methylococcus capsulatus (strain ATCC 33009 / NCIMB 11132 / Bath).